A 656-amino-acid polypeptide reads, in one-letter code: MHPASVTTTSQDPCAPSGSCRGGRRRRPISVIGGVSFYGNTQVEDVENLLVQPAARPPVPAHQVPPYKAVSARLRPFTFSQSTPIGLDRVGRRRQMKTSNVSSDGGAESSALVDDNGSEEDFSYEELCQANPRYLQPGGEQLAINELISDGSVVCAEALWDHVTMDDQELGFKAGDVIQVLEASNKDWWWGRNEDKEAWFPASFVRLRVNQEELPENCSSSHGEEQDEDTSKARHKHPESQQQMRTNVIQEIMNTERVYIKHLKDICEGYIRQCRKHTGMFTVAQLATIFGNIEDIYKFQRKFLKDLEKQYNKEEPHLSEIGSCFLEHQEGFAIYSEYCNNHPGACVELSNLMKHSKYRHFFEACRLLQQMIDIALDGFLLTPVQKICKYPLQLAELLKYTTQEHGDYNNIKAAYEAMKNVACLINERKRKLESIDKIARWQVSIVGWEGLDILDRSSELIHSGELTKITRQGKSQQRIFFLFDHQLVSCKKDLLRRDMLYYKGRMDMDEVELVDVEDGRDKDWSLSLRNAFKLVSKATDEVHLFCARKQEDKARWLQAYADERRRVQEDQQMGMEIPENQKKLAMLNAQKAGHGKSKGYNSCPVAPPHQSLPPLHQRHITVPTSIPQQQVFALAEPKRKPSIFWHTFHKLTPFRK.

Polar residues predominate over residues 1-12; it reads MHPASVTTTSQD. Residues 1–26 form a disordered region; the sequence is MHPASVTTTSQDPCAPSGSCRGGRRR. Serine 82 carries the phosphoserine modification. The interval 85–115 is disordered; sequence IGLDRVGRRRQMKTSNVSSDGGAESSALVDD. Residues 102-154 are ABR (APC-binding region) domain; that stretch reads SSDGGAESSALVDDNGSEEDFSYEELCQANPRYLQPGGEQLAINELISDGSVV. Phosphoserine is present on serine 118. The 60-residue stretch at 151–210 folds into the SH3 domain; it reads GSVVCAEALWDHVTMDDQELGFKAGDVIQVLEASNKDWWWGRNEDKEAWFPASFVRLRVN. Residues 215–242 form a disordered region; the sequence is PENCSSSHGEEQDEDTSKARHKHPESQQ. Residues 244–428 form the DH domain; sequence MRTNVIQEIM…KNVACLINER (185 aa). One can recognise a PH domain in the interval 459-565; it reads ELIHSGELTK…WLQAYADERR (107 aa). Residues 565 to 656 are C-terminal tail; it reads RRVQEDQQMG…TFHKLTPFRK (92 aa).

As to quaternary structure, interacts (via ABR and SH3 domain) with APC. The binding of APC enhances its GEF activity by relieving it from an autoinhibitory conformation, in which the ABR and SH3 domains are associated with the C-terminal tail. Interacts (via C-terminal tail) with PPP1R9B (via C-terminus). Interacts with RAC1. As to expression, expression is aberrantly enhanced in most colorectal tumors.

The protein resides in the cytoplasm. The protein localises to the cell projection. It localises to the filopodium. It is found in the lamellipodium. Its subcellular location is the ruffle membrane. The protein resides in the podosome. Its activity is regulated as follows. Both the ABR and the SH3 domains contribute to maintaining the protein in an inhibited conformation by associating with the C-terminal tail. Binding of these domains to the C-terminal tail inhibits the activity of the protein by blocking a region that is required for its GEF activity. Acts as a guanine nucleotide exchange factor (GEF) for RHOA, RAC1 and CDC42 GTPases. Regulates cell migration and adhesion assembly and disassembly through a RAC1, PI3K, RHOA and AKT1-dependent mechanism. Increases both RAC1 and CDC42 activity, but decreases the amount of active RHOA. Required for MMP9 up-regulation via the JNK signaling pathway in colorectal tumor cells. Involved in tumor angiogenesis and may play a role in intestinal adenoma formation and tumor progression. The chain is Spermatogenesis-associated protein 13 (Spata13) from Mus musculus (Mouse).